The following is a 48-amino-acid chain: Protein PsbN (48 aa).

The helical transmembrane segment at 12–34 threads the bilayer; that stretch reads LLIAMVTITFGLTGYGLYTAFGP.

The protein belongs to the PsbN family.

The protein localises to the cellular thylakoid membrane. Its function is as follows. May play a role in photosystem I and II biogenesis. This is Protein PsbN from Prochlorococcus marinus (strain MIT 9313).